A 141-amino-acid chain; its full sequence is Putative pre-16S rRNA nuclease (141 aa).

The protein belongs to the YqgF nuclease family.

The protein localises to the cytoplasm. Functionally, could be a nuclease involved in processing of the 5'-end of pre-16S rRNA. The polypeptide is Putative pre-16S rRNA nuclease (Desulforudis audaxviator (strain MP104C)).